A 423-amino-acid polypeptide reads, in one-letter code: Glutamyl-tRNA reductase (423 aa).

Residues 49-52 (TCNR), Ser-106, 111-113 (EPQ), and Gln-117 each bind substrate. Cys-50 serves as the catalytic Nucleophile. Residue 186–191 (GAGDTS) coordinates NADP(+).

Belongs to the glutamyl-tRNA reductase family. In terms of assembly, homodimer.

It carries out the reaction (S)-4-amino-5-oxopentanoate + tRNA(Glu) + NADP(+) = L-glutamyl-tRNA(Glu) + NADPH + H(+). The protein operates within porphyrin-containing compound metabolism; protoporphyrin-IX biosynthesis; 5-aminolevulinate from L-glutamyl-tRNA(Glu): step 1/2. Its function is as follows. Catalyzes the NADPH-dependent reduction of glutamyl-tRNA(Glu) to glutamate 1-semialdehyde (GSA). This is Glutamyl-tRNA reductase from Idiomarina loihiensis (strain ATCC BAA-735 / DSM 15497 / L2-TR).